The sequence spans 559 residues: Glycerol kinase (559 aa).

Residue Thr20 coordinates ADP. ATP is bound by residues Thr20, Ser21, and Ser22. Residue Thr20 participates in sn-glycerol 3-phosphate binding. Arg24 is an ADP binding site. Residues Arg94, Glu95, and Tyr148 each coordinate sn-glycerol 3-phosphate. Glycerol contacts are provided by Arg94, Glu95, and Tyr148. A beta-D-fructose 1,6-bisphosphate-binding site is contributed by Gly252. Asp265 is a sn-glycerol 3-phosphate binding site. Glycerol-binding residues include Asp265 and Gln266. Residues Thr287, Gly332, Gly433, and Asn437 each coordinate ADP. ATP-binding residues include Thr287, Gly332, and Gly433. Zn(2+) is bound at residue Glu501. A helical membrane pass occupies residues 532-552; the sequence is IFCSLPLGFFIVSSMVMLIGA.

This sequence belongs to the FGGY kinase family.

It is found in the mitochondrion outer membrane. The protein resides in the nucleus. It localises to the cytoplasm. The protein localises to the cytosol. The catalysed reaction is glycerol + ATP = sn-glycerol 3-phosphate + ADP + H(+). The protein operates within polyol metabolism; glycerol degradation via glycerol kinase pathway; sn-glycerol 3-phosphate from glycerol: step 1/1. Kinase that plays a key role in glycerol metabolism, catalyzing its phosphorylation to produce sn-glycerol 3-phosphate. Sn-glycerol 3-phosphate is a crucial intermediate in various metabolic pathways, such as the synthesis of glycerolipids and triglycerides, glycogenesis, glycolysis and gluconeogenesis. The chain is Glycerol kinase from Rattus norvegicus (Rat).